We begin with the raw amino-acid sequence, 276 residues long: Diaminopimelate epimerase (276 aa).

Positions 13, 46, and 66 each coordinate substrate. The active-site Proton donor is the Cys75. Residues 76–77 (GN), Asn159, Asn192, and 210–211 (ER) each bind substrate. Residue Cys219 is the Proton acceptor of the active site. 220–221 (GS) lines the substrate pocket.

It belongs to the diaminopimelate epimerase family. As to quaternary structure, homodimer.

Its subcellular location is the cytoplasm. The catalysed reaction is (2S,6S)-2,6-diaminopimelate = meso-2,6-diaminopimelate. The protein operates within amino-acid biosynthesis; L-lysine biosynthesis via DAP pathway; DL-2,6-diaminopimelate from LL-2,6-diaminopimelate: step 1/1. In terms of biological role, catalyzes the stereoinversion of LL-2,6-diaminopimelate (L,L-DAP) to meso-diaminopimelate (meso-DAP), a precursor of L-lysine and an essential component of the bacterial peptidoglycan. The polypeptide is Diaminopimelate epimerase (Aliivibrio fischeri (strain ATCC 700601 / ES114) (Vibrio fischeri)).